The primary structure comprises 397 residues: Tryptophan synthase beta chain 1 (397 aa).

Residue lysine 90 is modified to N6-(pyridoxal phosphate)lysine.

The protein belongs to the TrpB family. As to quaternary structure, tetramer of two alpha and two beta chains. Pyridoxal 5'-phosphate is required as a cofactor.

It catalyses the reaction (1S,2R)-1-C-(indol-3-yl)glycerol 3-phosphate + L-serine = D-glyceraldehyde 3-phosphate + L-tryptophan + H2O. It functions in the pathway amino-acid biosynthesis; L-tryptophan biosynthesis; L-tryptophan from chorismate: step 5/5. In terms of biological role, the beta subunit is responsible for the synthesis of L-tryptophan from indole and L-serine. This chain is Tryptophan synthase beta chain 1 (trpB1), found in Aquifex aeolicus (strain VF5).